Here is a 350-residue protein sequence, read N- to C-terminus: MEVPNVKDFQWKRLAPLPSRRVYCSLLETGGQVYAIGGCDDNGVPMDCFEVYSPEADQWTALPRLPTARAGVAVTALGKRIMVIGGVGTNQLPLKVVEMYNIDEGKWKKRSMLREAAMGISVTAKDYRVYAAGGMGLDLRPHNHLQHYDMLKDMWVSLAPMPTPRYAATSFLRGSKIYVLGGRQSKYAVNAFEVFDIETRSWTKFPNIPYKRAFSSFVTLDNHLYSLGGLRQGRLYRQPKFLRTMDVFDMEQGGWLKMERSFFLKKRRADFVAGSLSGRVIVAGGLGNQPTVLETAEAFHPGKNKWEILPAMPTPRCACSSIVVKNCLLAVGGVNQGLSDAVEALCVSDS.

Kelch repeat units follow at residues 1–31 (MEVPNVKDFQWKRLAPLPSRRVYCSLLETGG), 32–79 (QVYA…ALGK), 81–127 (IMVI…AKDY), 128–175 (RVYA…LRGS), 176–222 (KIYV…TLDN), 224–278 (LYSL…SLSG), and 279–326 (RVIV…VVKN).

The sequence is that of Kelch domain-containing protein 8A (KLHDC8A) from Homo sapiens (Human).